The chain runs to 511 residues: Glucan endo-1,3-beta-glucosidase 1 (511 aa).

Residues 1-28 form the signal peptide; sequence MAFTSMVSTVPVLFFFFTLLLISANSSS. The N-linked (GlcNAc...) asparagine glycan is linked to N109. E137 functions as the Proton donor in the catalytic mechanism. 2 N-linked (GlcNAc...) asparagine glycosylation sites follow: N192 and N274. E284 acts as the Nucleophile in catalysis. N374, N378, N407, N473, and N480 each carry an N-linked (GlcNAc...) asparagine glycan. C382 and C445 form a disulfide bridge. The GPI-anchor amidated alanine moiety is linked to residue A485. Residues 486-511 constitute a propeptide, removed in mature form; it reads AGEATSRSLSRGFCVTIMILVTFSIL.

It belongs to the glycosyl hydrolase 17 family. Contains two additional disulfide bonds.

It localises to the cell membrane. It carries out the reaction Hydrolysis of (1-&gt;3)-beta-D-glucosidic linkages in (1-&gt;3)-beta-D-glucans.. The chain is Glucan endo-1,3-beta-glucosidase 1 from Arabidopsis thaliana (Mouse-ear cress).